Consider the following 621-residue polypeptide: 5-aminolevulinate synthase, mitochondrial (621 aa).

The interval 76–95 (DAKGSLAGRPVHHKAATEST) is disordered. Substrate is bound by residues arginine 122 and serine 234. Residues serine 286, histidine 314, and threonine 359 each coordinate pyridoxal 5'-phosphate. Lysine 362 is a catalytic residue. N6-(pyridoxal phosphate)lysine is present on lysine 362. 2 residues coordinate pyridoxal 5'-phosphate: threonine 391 and threonine 392. Residue threonine 477 coordinates substrate.

The protein belongs to the class-II pyridoxal-phosphate-dependent aminotransferase family. In terms of assembly, homodimer. It depends on pyridoxal 5'-phosphate as a cofactor.

The protein localises to the mitochondrion matrix. It carries out the reaction succinyl-CoA + glycine + H(+) = 5-aminolevulinate + CO2 + CoA. It functions in the pathway porphyrin-containing compound metabolism; protoporphyrin-IX biosynthesis; 5-aminolevulinate from glycine: step 1/1. Catalyzes the synthesis of 5-aminolevulinate (ALA) from succinyl-CoA and glycine, the first and rate-limiting step in heme biosynthesis. The chain is 5-aminolevulinate synthase, mitochondrial (hem1) from Agaricus bisporus (White button mushroom).